The chain runs to 400 residues: Elongation factor Tu (400 aa).

A tr-type G domain is found at 10-210 (KPHCNVGTIG…VDSYIPIPPR (201 aa)). Residues 19-26 (GHVDHGKT) are G1. 19–26 (GHVDHGKT) lines the GTP pocket. Threonine 26 contributes to the Mg(2+) binding site. The interval 60-64 (GLTIA) is G2. The segment at 81–84 (DCPG) is G3. GTP-binding positions include 81 to 85 (DCPGH) and 136 to 139 (NKCD). Residues 136–139 (NKCD) form a G4 region. The G5 stretch occupies residues 174-176 (SAI).

Belongs to the TRAFAC class translation factor GTPase superfamily. Classic translation factor GTPase family. EF-Tu/EF-1A subfamily. In terms of assembly, monomer.

It localises to the cytoplasm. It carries out the reaction GTP + H2O = GDP + phosphate + H(+). Functionally, GTP hydrolase that promotes the GTP-dependent binding of aminoacyl-tRNA to the A-site of ribosomes during protein biosynthesis. This chain is Elongation factor Tu, found in Dehalococcoides mccartyi (strain ATCC BAA-2266 / KCTC 15142 / 195) (Dehalococcoides ethenogenes (strain 195)).